A 324-amino-acid polypeptide reads, in one-letter code: ATP-dependent 6-phosphofructokinase (324 aa).

ATP is bound at residue glycine 11. 21–25 (RAVVR) lines the ADP pocket. Residues 72–73 (RE) and 102–105 (GNGS) contribute to the ATP site. Asparagine 103 is a Mg(2+) binding site. Residue 126-128 (TID) coordinates substrate. The active-site Proton acceptor is aspartate 128. Arginine 155 contributes to the ADP binding site. Substrate contacts are provided by residues arginine 163 and 170–172 (MGR). ADP-binding positions include 186–188 (GAD), arginine 212, and 214–216 (KKF). Substrate contacts are provided by residues glutamate 223, arginine 248, and 254–257 (YIQR).

This sequence belongs to the phosphofructokinase type A (PFKA) family. ATP-dependent PFK group I subfamily. Prokaryotic clade 'B1' sub-subfamily. In terms of assembly, homotetramer. Mg(2+) is required as a cofactor.

The protein localises to the cytoplasm. It catalyses the reaction beta-D-fructose 6-phosphate + ATP = beta-D-fructose 1,6-bisphosphate + ADP + H(+). The protein operates within carbohydrate degradation; glycolysis; D-glyceraldehyde 3-phosphate and glycerone phosphate from D-glucose: step 3/4. Allosterically activated by ADP and other diphosphonucleosides, and allosterically inhibited by phosphoenolpyruvate. Catalyzes the phosphorylation of D-fructose 6-phosphate to fructose 1,6-bisphosphate by ATP, the first committing step of glycolysis. The sequence is that of ATP-dependent 6-phosphofructokinase from Persephonella marina (strain DSM 14350 / EX-H1).